A 332-amino-acid polypeptide reads, in one-letter code: Phosphoribosylformylglycinamidine cyclo-ligase (332 aa).

The protein belongs to the AIR synthase family.

It localises to the cytoplasm. It catalyses the reaction 2-formamido-N(1)-(5-O-phospho-beta-D-ribosyl)acetamidine + ATP = 5-amino-1-(5-phospho-beta-D-ribosyl)imidazole + ADP + phosphate + H(+). It participates in purine metabolism; IMP biosynthesis via de novo pathway; 5-amino-1-(5-phospho-D-ribosyl)imidazole from N(2)-formyl-N(1)-(5-phospho-D-ribosyl)glycinamide: step 2/2. This Clostridium acetobutylicum (strain ATCC 824 / DSM 792 / JCM 1419 / IAM 19013 / LMG 5710 / NBRC 13948 / NRRL B-527 / VKM B-1787 / 2291 / W) protein is Phosphoribosylformylglycinamidine cyclo-ligase.